A 378-amino-acid chain; its full sequence is Metalloendoproteinase 2-MMP (378 aa).

The first 20 residues, 1-20 (MRFCVFGFLSLFLIVSPASA), serve as a signal peptide directing secretion. A propeptide spans 21–154 (WFFPNSTAVP…SRTHLHAVKR (134 aa)) (activation peptide). 5 N-linked (GlcNAc...) asparagine glycosylation sites follow: Asn25, Asn35, Asn46, Asn79, and Asn102. Positions 118–125 (PRCGNPDV) match the Cysteine switch motif. Cys120 serves as a coordination point for Zn(2+). N-linked (GlcNAc...) asparagine glycosylation is found at Asn127, Asn143, and Asn203. His280 lines the Zn(2+) pocket. Residue Glu281 is part of the active site. His284 and His290 together coordinate Zn(2+). An N-linked (GlcNAc...) asparagine glycan is attached at Asn330. Residue Ser349 is the site of GPI-anchor amidated serine attachment. A propeptide spans 350-378 (AAWRIDGSSRSTIVSLLLSTVGLVLWFLP) (removed in mature form).

It belongs to the peptidase M10A family. Matrix metalloproteinases (MMPs) subfamily. Zn(2+) serves as cofactor. Mostly expressed in roots, and, to a lower extent, in flowers, leaves and stems.

It is found in the cell membrane. Its activity is regulated as follows. Repressed by acetohydroxamic acid (AHA). Matrix metalloproteinases (MMPs) or matrixins may play a role in the degradation and remodeling of the extracellular matrix (ECM) during development or in response to stresses. Required for plant growth, morphogenesis, and development with particular relevance for flowering and senescence. Active on McaPLGLDpaAR-NH(2) (QF24) and myelin basic protein (MBP) and, to some extent, on beta-casein. The polypeptide is Metalloendoproteinase 2-MMP (Arabidopsis thaliana (Mouse-ear cress)).